Consider the following 324-residue polypeptide: tRNA U34 carboxymethyltransferase (324 aa).

Carboxy-S-adenosyl-L-methionine contacts are provided by residues lysine 92, tryptophan 106, lysine 111, glycine 131, 153–155 (DPS), methionine 197, tyrosine 201, and arginine 316.

This sequence belongs to the class I-like SAM-binding methyltransferase superfamily. CmoB family. As to quaternary structure, homotetramer.

The catalysed reaction is carboxy-S-adenosyl-L-methionine + 5-hydroxyuridine(34) in tRNA = 5-carboxymethoxyuridine(34) in tRNA + S-adenosyl-L-homocysteine + H(+). Functionally, catalyzes carboxymethyl transfer from carboxy-S-adenosyl-L-methionine (Cx-SAM) to 5-hydroxyuridine (ho5U) to form 5-carboxymethoxyuridine (cmo5U) at position 34 in tRNAs. In Hahella chejuensis (strain KCTC 2396), this protein is tRNA U34 carboxymethyltransferase.